Reading from the N-terminus, the 413-residue chain is Multifunctional CCA protein (413 aa).

Positions 8 and 11 each coordinate ATP. Glycine 8 and arginine 11 together coordinate CTP. Residues aspartate 21 and aspartate 23 each contribute to the Mg(2+) site. The ATP site is built by arginine 91, arginine 143, and arginine 146. The CTP site is built by arginine 91, arginine 143, and arginine 146. The HD domain occupies 232–333 (TGVHVMMVVD…VRFFERTDAL (102 aa)).

Belongs to the tRNA nucleotidyltransferase/poly(A) polymerase family. Bacterial CCA-adding enzyme type 1 subfamily. In terms of assembly, monomer. Can also form homodimers and oligomers. It depends on Mg(2+) as a cofactor. Ni(2+) is required as a cofactor.

The enzyme catalyses a tRNA precursor + 2 CTP + ATP = a tRNA with a 3' CCA end + 3 diphosphate. The catalysed reaction is a tRNA with a 3' CCA end + 2 CTP + ATP = a tRNA with a 3' CCACCA end + 3 diphosphate. Catalyzes the addition and repair of the essential 3'-terminal CCA sequence in tRNAs without using a nucleic acid template. Adds these three nucleotides in the order of C, C, and A to the tRNA nucleotide-73, using CTP and ATP as substrates and producing inorganic pyrophosphate. tRNA 3'-terminal CCA addition is required both for tRNA processing and repair. Also involved in tRNA surveillance by mediating tandem CCA addition to generate a CCACCA at the 3' terminus of unstable tRNAs. While stable tRNAs receive only 3'-terminal CCA, unstable tRNAs are marked with CCACCA and rapidly degraded. The sequence is that of Multifunctional CCA protein from Burkholderia multivorans (strain ATCC 17616 / 249).